The chain runs to 1072 residues: PWWP domain-containing protein 1 (1072 aa).

Residues 21–133 (DSIQDPKVTP…ADEKELDLGL (113 aa)) are disordered. Positions 25–38 (DPKVTPDDTVVDSS) are enriched in low complexity. Positions 66 to 77 (RVLESERSEKDG) are enriched in basic and acidic residues. Residues 96–128 (KDDESSEVKEEEEEEDGSDDQSSELGSEADEKE) are compositionally biased toward acidic residues. One can recognise a PWWP domain in the interval 173–234 (VGDLVWGKVK…PAELIPFEPN (62 aa)). A disordered region spans residues 365-387 (KSPRSSVSTLEPHNRAPPRAPLS). Residues 366-375 (SPRSSVSTLE) are compositionally biased toward polar residues. Positions 402-409 (SKKPTKVK) match the Nuclear localization signal 1 motif. Disordered stretches follow at residues 486–619 (AIPG…GEAG), 681–738 (LSVS…KTNQ), 871–931 (KAEP…NGNR), and 944–973 (ENSSKANTEPPQVTMTLNRNSGPSSSSSSV). The segment covering 498-526 (SLDEEKGLAEKSKERMEERAAVLPEHGKS) has biased composition (basic and acidic residues). The span at 545–568 (AGSSLQPLLESHTSASEGKSSTGS) shows a compositional bias: polar residues. Short sequence motifs (nuclear localization signal) lie at residues 596–603 (KKKKKEPD), 705–712 (VKRTEDPS), and 733–740 (LKKTNQLK). A compositionally biased stretch (basic and acidic residues) spans 706–729 (KRTEDPSKAGKKRLSSDRQDEIPS). A compositionally biased stretch (basic and acidic residues) spans 871 to 880 (KAEPREPENT). Residues 897 to 906 (LHQPTLPPPN) show a composition bias toward pro residues. A compositionally biased stretch (low complexity) spans 921 to 930 (SSSSNNGNGN). Residues 947-966 (SKANTEPPQVTMTLNRNSGP) show a composition bias toward polar residues.

This sequence belongs to the PDP family. In terms of assembly, interacts with MSI4/FVE. Component of the PRC2 (polycomb repressive complex 2) complex which regulates histone methylation on histone H3K27.

It localises to the nucleus. Together with PDP2, PDP3 and PDP6, interacts with MSI4/FVE and MSI5 to suppress FLC, MAF4 and MAF5 expression by regulating the function of the PRC2 complex and modulating H3K27me3 level, thereby promoting flowering. The polypeptide is PWWP domain-containing protein 1 (Arabidopsis thaliana (Mouse-ear cress)).